Here is a 477-residue protein sequence, read N- to C-terminus: Erythritol/L-threitol-binding protein (477 aa).

Positions 1 to 38 (MMSRESQPGLHRQLSRRNMLAAMGLAGAAAVSLPVLSA) form a signal peptide, tat-type signal.

The protein belongs to the bacterial solute-binding protein 1 family. Predicted to be exported by the Tat system. The position of the signal peptide cleavage has not been experimentally proven.

Functionally, part of an ABC transporter complex involved in erythritol/L-threitol import. Binds erythritol and L-threitol. Functions in the transport for the degradation pathways of erythritol and L-threitol, that allow M.smegmatis to grow on these compounds as the sole carbon source. The chain is Erythritol/L-threitol-binding protein from Mycolicibacterium smegmatis (strain ATCC 700084 / mc(2)155) (Mycobacterium smegmatis).